Here is a 207-residue protein sequence, read N- to C-terminus: Large ribosomal subunit protein uL4 (207 aa).

The tract at residues 53-85 (ERSDVARTGKKFGRQKGGGTARHGDRKAPIFIG) is disordered.

This sequence belongs to the universal ribosomal protein uL4 family. In terms of assembly, part of the 50S ribosomal subunit.

Its function is as follows. One of the primary rRNA binding proteins, this protein initially binds near the 5'-end of the 23S rRNA. It is important during the early stages of 50S assembly. It makes multiple contacts with different domains of the 23S rRNA in the assembled 50S subunit and ribosome. Functionally, forms part of the polypeptide exit tunnel. This Novosphingobium aromaticivorans (strain ATCC 700278 / DSM 12444 / CCUG 56034 / CIP 105152 / NBRC 16084 / F199) protein is Large ribosomal subunit protein uL4.